Here is a 236-residue protein sequence, read N- to C-terminus: Phosphoribosylaminoimidazole-succinocarboxamide synthase (236 aa).

This sequence belongs to the SAICAR synthetase family.

The enzyme catalyses 5-amino-1-(5-phospho-D-ribosyl)imidazole-4-carboxylate + L-aspartate + ATP = (2S)-2-[5-amino-1-(5-phospho-beta-D-ribosyl)imidazole-4-carboxamido]succinate + ADP + phosphate + 2 H(+). It functions in the pathway purine metabolism; IMP biosynthesis via de novo pathway; 5-amino-1-(5-phospho-D-ribosyl)imidazole-4-carboxamide from 5-amino-1-(5-phospho-D-ribosyl)imidazole-4-carboxylate: step 1/2. This Rickettsia africae (strain ESF-5) protein is Phosphoribosylaminoimidazole-succinocarboxamide synthase.